We begin with the raw amino-acid sequence, 156 residues long: Cyanate hydratase (156 aa).

Active-site residues include Arg-96, Glu-99, and Ser-122.

Belongs to the cyanase family.

It catalyses the reaction cyanate + hydrogencarbonate + 3 H(+) = NH4(+) + 2 CO2. Functionally, catalyzes the reaction of cyanate with bicarbonate to produce ammonia and carbon dioxide. This is Cyanate hydratase from Pseudomonas entomophila (strain L48).